Consider the following 581-residue polypeptide: Meiotic PUF family protein 1 (581 aa).

Residues 225-580 (FPNGTTEPFE…RIAALVEKSK (356 aa)) enclose the PUM-HD domain. Pumilio repeat units follow at residues 291-326 (TILP…SFSY), 327-362 (FLKK…NLIE), 363-398 (ELIE…GIFD), 403-438 (KMQG…TCLD), 439-474 (EIIN…RILN), 475-510 (SLLK…RYVK), 518-554 (ELPT…LMAE), and 555-581 (HLKK…KSKS).

In terms of biological role, RNA-binding protein essential for meiotic progression. The sequence is that of Meiotic PUF family protein 1 (mpf1) from Schizosaccharomyces pombe (strain 972 / ATCC 24843) (Fission yeast).